Consider the following 713-residue polypeptide: Leucine-rich repeat-containing protein 4B (713 aa).

Residues 1-35 (MARARGSPCPPLPPGRMSWPHGALLFLWLFSPPLG) form the signal peptide. At 36 to 576 (AGGGGVAVTS…DLDDVMKTTK (541 aa)) the chain is on the extracellular side. The LRRNT domain maps to 48–86 (GGGSPPATSCPVACSCSNQASRVICTRRDLAEVPASIPV). LRR repeat units lie at residues 87-108 (NTRY…TFKH), 111-132 (HLEI…AFNG), 135-156 (SLNT…AFEY), 159-180 (KLRE…AFNR), 183-205 (SLRR…AFEG), 208-229 (NLRY…TALV), 230-251 (RLEE…SFQG), 254-275 (SLRK…AFDD), and 278-299 (SLEE…LFTP). N224 carries an N-linked (GlcNAc...) asparagine glycan. N-linked (GlcNAc...) asparagine glycans are attached at residues N283, N333, N374, N400, N422, N425, N444, and N452. In terms of domain architecture, LRRCT spans 311 to 363 (NPWHCNCDVLWLSWWLKETVPSNTTCCARCHAPAGLKGRYIGELDQSHFTCYA). One can recognise an Ig-like C2-type domain in the interval 364–452 (PVIVEPPTDL…GNTTASATLN (89 aa)). A disulfide bridge links C385 with C436. The interval 497-551 (TQPGEEALQPRGTEKEPPGPTTDGVWGGGRPGDAAGPASSSTTAPAPRSSRPTEK) is disordered. Residues 528 to 546 (GDAAGPASSSTTAPAPRSS) show a composition bias toward low complexity. Residues 577-597 (IIIGCFVAITFMAAVMLVAFY) traverse the membrane as a helical segment. Over 598–713 (KLRKQHQLHK…SKENVQETQI (116 aa)) the chain is Cytoplasmic. S693 carries the post-translational modification Phosphoserine. The interval 694–713 (IHEPLLFKSGSKENVQETQI) is disordered. The segment covering 703 to 713 (GSKENVQETQI) has biased composition (basic and acidic residues).

In terms of assembly, interacts with PTPRF. Interacts with DLG4. In terms of processing, N-glycosylated. O-glycosylated; contains sialic acid.

The protein localises to the membrane. Its subcellular location is the presynaptic cell membrane. Functionally, synaptic adhesion protein. Regulates the formation of excitatory synapses. The trans-synaptic adhesion between LRRC4B and PTPRF regulates the formation of excitatory synapses in a bidirectional manner. This chain is Leucine-rich repeat-containing protein 4B (LRRC4B), found in Homo sapiens (Human).